The chain runs to 218 residues: Ependymin (218 aa).

An N-terminal signal peptide occupies residues 1 to 20 (MHTVKLLCVVFSCLCAVAWG). Residues asparagine 74 and asparagine 97 are each glycosylated (N-linked (GlcNAc...) asparagine).

It belongs to the ependymin family. As to quaternary structure, forms disulfide-linked dimers. Binds calcium through the terminal sialic acids.

The protein localises to the secreted. In terms of biological role, may play a role in neural plasticity. May be involved during axon regeneration. This chain is Ependymin (epd), found in Devario aequipinnatus (Giant danio).